The following is a 291-amino-acid chain: Probable protein S-acyltransferase 12 (291 aa).

2 helical membrane-spanning segments follow: residues 14-34 (GYFMILLVVAVVGVSYYAVVV) and 49-69 (LSALAALIIFVFHFLLIMLLW). The DHHC domain maps to 111–161 (GYCTKCRNVKPPRCHHCSVCQRCVLKMDHHCVWIVNCVGARNYKFFLLFLF). The active-site S-palmitoyl cysteine intermediate is cysteine 141. The next 2 helical transmembrane spans lie at 155–175 (FFLLFLFYTFLETMLDVIVLL) and 198–218 (LVLAFVLNFAFVLSLLCFVVM).

The protein belongs to the DHHC palmitoyltransferase family.

It is found in the cell membrane. It carries out the reaction L-cysteinyl-[protein] + hexadecanoyl-CoA = S-hexadecanoyl-L-cysteinyl-[protein] + CoA. In terms of biological role, palmitoyl acyltransferase. The chain is Probable protein S-acyltransferase 12 (PAT12) from Arabidopsis thaliana (Mouse-ear cress).